A 210-amino-acid polypeptide reads, in one-letter code: Uridine kinase (210 aa).

ATP is bound at residue 12 to 19 (GGSGGGKT).

It belongs to the uridine kinase family.

The protein resides in the cytoplasm. It catalyses the reaction uridine + ATP = UMP + ADP + H(+). The catalysed reaction is cytidine + ATP = CMP + ADP + H(+). The protein operates within pyrimidine metabolism; CTP biosynthesis via salvage pathway; CTP from cytidine: step 1/3. It participates in pyrimidine metabolism; UMP biosynthesis via salvage pathway; UMP from uridine: step 1/1. This is Uridine kinase from Streptococcus uberis (strain ATCC BAA-854 / 0140J).